The sequence spans 238 residues: Peptidyl-tRNA hydrolase (238 aa).

Y14 lines the tRNA pocket. Catalysis depends on H19, which acts as the Proton acceptor. Residues F64, N66, and N112 each coordinate tRNA. Basic and acidic residues predominate over residues 190 to 202 (KTEEPAPKPEKKT). A disordered region spans residues 190–225 (KTEEPAPKPEKKTVAKSHIHQARNHNQPRMPESGPM). Basic residues predominate over residues 203–212 (VAKSHIHQAR).

Belongs to the PTH family. Monomer.

The protein resides in the cytoplasm. It carries out the reaction an N-acyl-L-alpha-aminoacyl-tRNA + H2O = an N-acyl-L-amino acid + a tRNA + H(+). Hydrolyzes ribosome-free peptidyl-tRNAs (with 1 or more amino acids incorporated), which drop off the ribosome during protein synthesis, or as a result of ribosome stalling. Its function is as follows. Catalyzes the release of premature peptidyl moieties from peptidyl-tRNA molecules trapped in stalled 50S ribosomal subunits, and thus maintains levels of free tRNAs and 50S ribosomes. In Rhizobium rhizogenes (strain K84 / ATCC BAA-868) (Agrobacterium radiobacter), this protein is Peptidyl-tRNA hydrolase.